Consider the following 235-residue polypeptide: Large ribosomal subunit protein uL1 (235 aa).

It belongs to the universal ribosomal protein uL1 family. In terms of assembly, part of the 50S ribosomal subunit.

In terms of biological role, binds directly to 23S rRNA. The L1 stalk is quite mobile in the ribosome, and is involved in E site tRNA release. Protein L1 is also a translational repressor protein, it controls the translation of the L11 operon by binding to its mRNA. The protein is Large ribosomal subunit protein uL1 of Mycolicibacterium smegmatis (strain ATCC 700084 / mc(2)155) (Mycobacterium smegmatis).